The following is a 422-amino-acid chain: Alcohol dehydrogenase 4 (422 aa).

The transit peptide at 1 to 29 (MSILRSPFRLIRSPARFFPSLFHSSCNQS) directs the protein to the mitochondrion. Residues Asp82, Asn114, Gly141, Ser142, Thr181, Thr182, Thr190, Phe192, Lys203, and Gly225 each coordinate NAD(+). Positions 237, 241, and 306 each coordinate Fe(2+). NAD(+) is bound by residues His310 and His320. His320 is a binding site for Fe(2+).

Belongs to the iron-containing alcohol dehydrogenase family. It depends on Zn(2+) as a cofactor.

It localises to the mitochondrion matrix. The enzyme catalyses a primary alcohol + NAD(+) = an aldehyde + NADH + H(+). It catalyses the reaction a secondary alcohol + NAD(+) = a ketone + NADH + H(+). The catalysed reaction is ethanol + NAD(+) = acetaldehyde + NADH + H(+). Its function is as follows. Involved in ethanol oxidation in mitochondria. The chain is Alcohol dehydrogenase 4 (adh4) from Schizosaccharomyces pombe (strain 972 / ATCC 24843) (Fission yeast).